The sequence spans 139 residues: Large ribosomal subunit protein uL22 (139 aa).

A disordered region spans residues 1 to 21 (MTAPEQTYRNKKQRKQQHKLR). A compositionally biased stretch (basic residues) spans 9 to 21 (RNKKQRKQQHKLR).

Belongs to the universal ribosomal protein uL22 family. Part of the 50S ribosomal subunit.

In terms of biological role, this protein binds specifically to 23S rRNA; its binding is stimulated by other ribosomal proteins, e.g. L4, L17, and L20. It is important during the early stages of 50S assembly. It makes multiple contacts with different domains of the 23S rRNA in the assembled 50S subunit and ribosome. The globular domain of the protein is located near the polypeptide exit tunnel on the outside of the subunit, while an extended beta-hairpin is found that lines the wall of the exit tunnel in the center of the 70S ribosome. This Deinococcus geothermalis (strain DSM 11300 / CIP 105573 / AG-3a) protein is Large ribosomal subunit protein uL22.